Here is a 67-residue protein sequence, read N- to C-terminus: UPF0253 protein VV2574 (67 aa).

It belongs to the UPF0253 family.

The protein is UPF0253 protein VV2574 of Vibrio vulnificus (strain YJ016).